Here is a 296-residue protein sequence, read N- to C-terminus: Cytidine deaminase (296 aa).

CMP/dCMP-type deaminase domains are found at residues 48-168 and 187-296; these read DADA…FGPV and QNMN…FIEE. 89 to 91 contributes to the substrate binding site; the sequence is NME. A Zn(2+)-binding site is contributed by H102. Residue E104 is the Proton donor of the active site. Zn(2+)-binding residues include C129 and C132.

Belongs to the cytidine and deoxycytidylate deaminase family. In terms of assembly, homodimer. Zn(2+) is required as a cofactor.

It catalyses the reaction cytidine + H2O + H(+) = uridine + NH4(+). The catalysed reaction is 2'-deoxycytidine + H2O + H(+) = 2'-deoxyuridine + NH4(+). This enzyme scavenges exogenous and endogenous cytidine and 2'-deoxycytidine for UMP synthesis. This is Cytidine deaminase from Pectobacterium carotovorum subsp. carotovorum (strain PC1).